A 176-amino-acid chain; its full sequence is NADH-dependent flavin reductase (176 aa).

FAD contacts are provided by residues 39 to 46 (EDSVHGMT) and 48 to 49 (NA). Ser-52 contributes to the NAD(+) binding site. FAD is bound by residues 63–65 (SIS), 69–70 (KM), and 95–96 (HF). NAD(+)-binding positions include His-137 and 157–160 (FYTG).

This sequence belongs to the non-flavoprotein flavin reductase family. As to quaternary structure, homodimer. 4-nitrophenol 2-monooxygenase complex consists of an oxygenase component NphA1 and a flavin reductase component NphA2.

It carries out the reaction a reduced flavin + NAD(+) = an oxidized flavin + NADH + 2 H(+). Catalyzes the reduction of FAD with the concomitant oxidation of NADH. NAD is the physiological electron donor. Subsequently, the reduced flavins diffuse to the oxygenase component NphA2. The chain is NADH-dependent flavin reductase (nphA2) from Rhodococcus sp.